Here is a 357-residue protein sequence, read N- to C-terminus: Alanine racemase (357 aa).

The Proton acceptor; specific for D-alanine role is filled by lysine 34. Position 34 is an N6-(pyridoxal phosphate)lysine (lysine 34). Arginine 129 serves as a coordination point for substrate. The active-site Proton acceptor; specific for L-alanine is the tyrosine 254. Methionine 302 provides a ligand contact to substrate.

The protein belongs to the alanine racemase family. Pyridoxal 5'-phosphate is required as a cofactor.

The catalysed reaction is L-alanine = D-alanine. Its pathway is amino-acid biosynthesis; D-alanine biosynthesis; D-alanine from L-alanine: step 1/1. Functionally, catalyzes the interconversion of L-alanine and D-alanine. Likely plays an important role in supplying D-alanine, which is an indispensable constituent in the biosynthesis of bacterial cell-wall peptidoglycan. This Aeromonas hydrophila subsp. hydrophila (strain ATCC 7966 / DSM 30187 / BCRC 13018 / CCUG 14551 / JCM 1027 / KCTC 2358 / NCIMB 9240 / NCTC 8049) protein is Alanine racemase.